The sequence spans 1067 residues: DNA-directed RNA polymerase subunit beta (1067 aa).

This sequence belongs to the RNA polymerase beta chain family. In plastids the minimal PEP RNA polymerase catalytic core is composed of four subunits: alpha, beta, beta', and beta''. When a (nuclear-encoded) sigma factor is associated with the core the holoenzyme is formed, which can initiate transcription.

The protein localises to the plastid. It is found in the chloroplast. It carries out the reaction RNA(n) + a ribonucleoside 5'-triphosphate = RNA(n+1) + diphosphate. Its function is as follows. DNA-dependent RNA polymerase catalyzes the transcription of DNA into RNA using the four ribonucleoside triphosphates as substrates. The chain is DNA-directed RNA polymerase subunit beta from Ipomoea purpurea (Common morning glory).